The primary structure comprises 183 residues: MKQPDRNQQQGAKSNRPAINDEIRSKEVRLVGADGEQKGIVSLNEALRAAEEVELDLVEIVANAEPPVCKIMDYNKHLFDLKQKQKDAKKKQHQVQVKEIKLRPATDVGDYQVKLRAILKFLEEGNKVKITLRFRGREMAHQQLGLAQLQKIEADVTEYGVVEQAPKMEGRQMGMLLGPKKKK.

Positions 1-13 are enriched in polar residues; it reads MKQPDRNQQQGAK. Positions 1–24 are disordered; sequence MKQPDRNQQQGAKSNRPAINDEIR.

Belongs to the IF-3 family. As to quaternary structure, monomer.

The protein localises to the cytoplasm. Functionally, IF-3 binds to the 30S ribosomal subunit and shifts the equilibrium between 70S ribosomes and their 50S and 30S subunits in favor of the free subunits, thus enhancing the availability of 30S subunits on which protein synthesis initiation begins. This chain is Translation initiation factor IF-3, found in Acinetobacter baylyi (strain ATCC 33305 / BD413 / ADP1).